A 245-amino-acid polypeptide reads, in one-letter code: Eukaryotic translation initiation factor 3 subunit K (245 aa).

One can recognise a PCI domain in the interval 46 to 227; the sequence is YDCYANLALL…EAKGTVVREN (182 aa).

It belongs to the eIF-3 subunit K family. Component of the eukaryotic translation initiation factor 3 (eIF-3) complex.

It localises to the cytoplasm. Functionally, component of the eukaryotic translation initiation factor 3 (eIF-3) complex, which is involved in protein synthesis of a specialized repertoire of mRNAs and, together with other initiation factors, stimulates binding of mRNA and methionyl-tRNAi to the 40S ribosome. The eIF-3 complex specifically targets and initiates translation of a subset of mRNAs involved in cell proliferation. In Sclerotinia sclerotiorum (strain ATCC 18683 / 1980 / Ss-1) (White mold), this protein is Eukaryotic translation initiation factor 3 subunit K.